The sequence spans 187 residues: Protein lethal(2)essential for life (187 aa).

The sHSP domain maps to 61–170; that stretch reads NSLQKQESGS…TERLVQITQT (110 aa). The tract at residues 151–187 is disordered; it reads APMKALPPPQTERLVQITQTGPSSKEDNAKKVETSTA. Residues 174–187 are compositionally biased toward basic and acidic residues; it reads SKEDNAKKVETSTA.

This sequence belongs to the small heat shock protein (HSP20) family. Ubiquitously expressed during embryogenesis with no sign of tissue specificity in expression up to stage 16.

Its function is as follows. Vital role in embryonic development. This is Protein lethal(2)essential for life (l(2)efl) from Drosophila melanogaster (Fruit fly).